A 121-amino-acid chain; its full sequence is Small ribosomal subunit protein uS13 (121 aa).

Residues 93–121 (RGLPVRGQNTKNNARTRKGPRRTVANKKK) are disordered. The span at 106–121 (ARTRKGPRRTVANKKK) shows a compositional bias: basic residues.

This sequence belongs to the universal ribosomal protein uS13 family. Part of the 30S ribosomal subunit. Forms a loose heterodimer with protein S19. Forms two bridges to the 50S subunit in the 70S ribosome.

In terms of biological role, located at the top of the head of the 30S subunit, it contacts several helices of the 16S rRNA. In the 70S ribosome it contacts the 23S rRNA (bridge B1a) and protein L5 of the 50S subunit (bridge B1b), connecting the 2 subunits; these bridges are implicated in subunit movement. Contacts the tRNAs in the A and P-sites. This chain is Small ribosomal subunit protein uS13, found in Bacillus pumilus (strain SAFR-032).